Consider the following 122-residue polypeptide: Ribosome-binding factor A (122 aa).

This sequence belongs to the RbfA family. Monomer. Binds 30S ribosomal subunits, but not 50S ribosomal subunits or 70S ribosomes.

Its subcellular location is the cytoplasm. In terms of biological role, one of several proteins that assist in the late maturation steps of the functional core of the 30S ribosomal subunit. Associates with free 30S ribosomal subunits (but not with 30S subunits that are part of 70S ribosomes or polysomes). Required for efficient processing of 16S rRNA. May interact with the 5'-terminal helix region of 16S rRNA. This is Ribosome-binding factor A from Polynucleobacter necessarius subsp. necessarius (strain STIR1).